A 286-amino-acid chain; its full sequence is Thymidylate synthase (286 aa).

140 to 141 (RR) serves as a coordination point for dUMP. The Nucleophile role is filled by cysteine 161. Residues 185-188 (RSND), asparagine 196, and 226-228 (HIY) each bind dUMP. Aspartate 188 is a binding site for (6R)-5,10-methylene-5,6,7,8-tetrahydrofolate. A (6R)-5,10-methylene-5,6,7,8-tetrahydrofolate-binding site is contributed by alanine 285.

The protein belongs to the thymidylate synthase family. Bacterial-type ThyA subfamily. Homodimer.

It localises to the cytoplasm. The enzyme catalyses dUMP + (6R)-5,10-methylene-5,6,7,8-tetrahydrofolate = 7,8-dihydrofolate + dTMP. It functions in the pathway pyrimidine metabolism; dTTP biosynthesis. Its function is as follows. Catalyzes the reductive methylation of 2'-deoxyuridine-5'-monophosphate (dUMP) to 2'-deoxythymidine-5'-monophosphate (dTMP) while utilizing 5,10-methylenetetrahydrofolate (mTHF) as the methyl donor and reductant in the reaction, yielding dihydrofolate (DHF) as a by-product. This enzymatic reaction provides an intracellular de novo source of dTMP, an essential precursor for DNA biosynthesis. This Streptococcus thermophilus (strain ATCC BAA-491 / LMD-9) protein is Thymidylate synthase.